The primary structure comprises 513 residues: Ankyrin repeat domain-containing protein 13C-B (513 aa).

Basic and acidic residues predominate over residues M1–E19. Disordered stretches follow at residues M1–F34 and P55–P77. A compositionally biased stretch (acidic residues) spans D20–T29. ANK repeat units lie at residues D83–N114, H115–V144, and Q148–R177.

It localises to the endoplasmic reticulum membrane. Acts as a molecular chaperone for G protein-coupled receptors, regulating their biogenesis and exit from the ER. The protein is Ankyrin repeat domain-containing protein 13C-B (ankrd13c-b) of Xenopus laevis (African clawed frog).